The primary structure comprises 190 residues: Peptidyl-tRNA hydrolase (190 aa).

Tyrosine 18 lines the tRNA pocket. The active-site Proton acceptor is the histidine 23. Positions 67, 69, and 115 each coordinate tRNA.

Belongs to the PTH family. In terms of assembly, monomer.

The protein localises to the cytoplasm. It carries out the reaction an N-acyl-L-alpha-aminoacyl-tRNA + H2O = an N-acyl-L-amino acid + a tRNA + H(+). In terms of biological role, hydrolyzes ribosome-free peptidyl-tRNAs (with 1 or more amino acids incorporated), which drop off the ribosome during protein synthesis, or as a result of ribosome stalling. Catalyzes the release of premature peptidyl moieties from peptidyl-tRNA molecules trapped in stalled 50S ribosomal subunits, and thus maintains levels of free tRNAs and 50S ribosomes. This chain is Peptidyl-tRNA hydrolase, found in Leptospira interrogans serogroup Icterohaemorrhagiae serovar Lai (strain 56601).